We begin with the raw amino-acid sequence, 129 residues long: Large ribosomal subunit protein uL22 (129 aa).

It belongs to the universal ribosomal protein uL22 family. Part of the 50S ribosomal subunit.

In terms of biological role, this protein binds specifically to 23S rRNA; its binding is stimulated by other ribosomal proteins, e.g. L4, L17, and L20. It is important during the early stages of 50S assembly. It makes multiple contacts with different domains of the 23S rRNA in the assembled 50S subunit and ribosome. Functionally, the globular domain of the protein is located near the polypeptide exit tunnel on the outside of the subunit, while an extended beta-hairpin is found that lines the wall of the exit tunnel in the center of the 70S ribosome. This is Large ribosomal subunit protein uL22 from Bartonella quintana (strain Toulouse) (Rochalimaea quintana).